A 220-amino-acid polypeptide reads, in one-letter code: Small ribosomal subunit protein uS3 (220 aa).

The KH type-2 domain occupies 38–106 (IREFVKKSLN…EVFLNIVEVR (69 aa)).

Belongs to the universal ribosomal protein uS3 family. As to quaternary structure, part of the 30S ribosomal subunit. Forms a tight complex with proteins S10 and S14.

Its function is as follows. Binds the lower part of the 30S subunit head. Binds mRNA in the 70S ribosome, positioning it for translation. This chain is Small ribosomal subunit protein uS3, found in Myxococcus xanthus (strain DK1622).